Here is a 380-residue protein sequence, read N- to C-terminus: Cytochrome b (380 aa).

A run of 4 helical transmembrane segments spans residues 33 to 53 (FGSL…FLAM), 77 to 98 (WLIR…YLHI), 113 to 133 (WNVG…GYVL), and 178 to 198 (FFAF…LHLL). His83 and His97 together coordinate heme b. Heme b is bound by residues His182 and His196. His201 contacts a ubiquinone. The next 4 helical transmembrane spans lie at 226 to 246 (YKDL…ALFS), 288 to 308 (LGGV…PILH), 320 to 340 (FSQI…WIGG), and 347 to 367 (YIII…VFFP).

The protein belongs to the cytochrome b family. As to quaternary structure, the cytochrome bc1 complex contains 3 respiratory subunits (MT-CYB, CYC1 and UQCRFS1), 2 core proteins (UQCRC1 and UQCRC2) and probably 6 low-molecular weight proteins. Heme b serves as cofactor.

It is found in the mitochondrion inner membrane. In terms of biological role, component of the ubiquinol-cytochrome c reductase complex (complex III or cytochrome b-c1 complex) that is part of the mitochondrial respiratory chain. The b-c1 complex mediates electron transfer from ubiquinol to cytochrome c. Contributes to the generation of a proton gradient across the mitochondrial membrane that is then used for ATP synthesis. This Apogon semilineatus (Half-lined cardinal) protein is Cytochrome b (mt-cyb).